Here is a 549-residue protein sequence, read N- to C-terminus: Lipase 1 (549 aa).

A signal peptide spans 1-15 (MELALALSLIASVAA). A disulfide bridge connects residues Cys75 and Cys112. The active-site Acyl-ester intermediate is Ser224. Cys283 and Cys292 are joined by a disulfide. N-linked (GlcNAc...) asparagine glycosylation is present at Asn329. Residue Glu356 is the Charge relay system of the active site. Asn366 is a glycosylation site (N-linked (GlcNAc...) asparagine). His464 functions as the Charge relay system in the catalytic mechanism.

Belongs to the type-B carboxylesterase/lipase family.

It catalyses the reaction a triacylglycerol + H2O = a diacylglycerol + a fatty acid + H(+). This Diutina rugosa (Yeast) protein is Lipase 1 (LIP1).